The chain runs to 491 residues: Ketol-acid reductoisomerase (NADP(+)) (491 aa).

Residues 15–208 form the KARI N-terminal Rossmann domain; sequence AQLGKCRFMG…GGHRAGVLES (194 aa). NADP(+) contacts are provided by residues 45-48, arginine 68, arginine 76, serine 78, and 108-110; these read CGAQ and DKQ. Histidine 132 is an active-site residue. An NADP(+)-binding site is contributed by glycine 158. KARI C-terminal knotted domains are found at residues 209-344 and 345-484; these read SFVA…TAPQ and FEGK…MTDM. 4 residues coordinate Mg(2+): aspartate 217, glutamate 221, glutamate 389, and glutamate 393. Serine 414 contributes to the substrate binding site.

The protein belongs to the ketol-acid reductoisomerase family. Mg(2+) serves as cofactor.

It catalyses the reaction (2R)-2,3-dihydroxy-3-methylbutanoate + NADP(+) = (2S)-2-acetolactate + NADPH + H(+). The enzyme catalyses (2R,3R)-2,3-dihydroxy-3-methylpentanoate + NADP(+) = (S)-2-ethyl-2-hydroxy-3-oxobutanoate + NADPH + H(+). The protein operates within amino-acid biosynthesis; L-isoleucine biosynthesis; L-isoleucine from 2-oxobutanoate: step 2/4. Its pathway is amino-acid biosynthesis; L-valine biosynthesis; L-valine from pyruvate: step 2/4. In terms of biological role, involved in the biosynthesis of branched-chain amino acids (BCAA). Catalyzes an alkyl-migration followed by a ketol-acid reduction of (S)-2-acetolactate (S2AL) to yield (R)-2,3-dihydroxy-isovalerate. In the isomerase reaction, S2AL is rearranged via a Mg-dependent methyl migration to produce 3-hydroxy-3-methyl-2-ketobutyrate (HMKB). In the reductase reaction, this 2-ketoacid undergoes a metal-dependent reduction by NADPH to yield (R)-2,3-dihydroxy-isovalerate. The protein is Ketol-acid reductoisomerase (NADP(+)) of Salmonella schwarzengrund (strain CVM19633).